A 513-amino-acid polypeptide reads, in one-letter code: t-SNARE domain-containing protein 1 (513 aa).

Disordered regions lie at residues 1–23 (MSYGSIARGGGLGSRGPFGGPSR) and 49–128 (ESKL…KPNF). A compositionally biased stretch (gly residues) spans 7–19 (ARGGGLGSRGPFG). S378 carries the phosphoserine modification. In terms of domain architecture, t-SNARE coiled-coil homology spans 416–478 (LEAIRLREEA…EAARQLLAGA (63 aa)). A helical membrane pass occupies residues 491 to 511 (CFLSAGVTALLVIIIIIATSV).

The protein resides in the membrane. The sequence is that of t-SNARE domain-containing protein 1 (TSNARE1) from Homo sapiens (Human).